A 367-amino-acid polypeptide reads, in one-letter code: MSLADSVLAVNNDLPIRTDSPVHSGKVRSVYWLTDADSRRLIQTKGYNVPEDTPLAIMVISDRISAFDCIFHGEGGLKGIPGKGAALNAISNHWFKLFAENGLADSHILDIPHPFVWIVQKARPIKVEAICRQYITGSMWRAYSKGERVFCGITLPEGLEKDQKLPDLLITPSTKGILTGIPGVPAQDDVNISRSDIEANYQAFGFEKVEDIDLYEKLLKDGFKVIAKALADLDQVFVDTKFEFGYVTDKNGNSKLIYMDEVGTPDSSRIWDGAAYRDGKILENSKEGFRQFLLNHFPDPDILLNKDRMPEREALARDNALPLEAMMDVSRTYTGIAEKVTGAAIPLPANPKADIIKILREEYDLIV.

Belongs to the SAICAR synthetase family.

The catalysed reaction is 5-amino-1-(5-phospho-D-ribosyl)imidazole-4-carboxylate + L-aspartate + ATP = (2S)-2-[5-amino-1-(5-phospho-beta-D-ribosyl)imidazole-4-carboxamido]succinate + ADP + phosphate + 2 H(+). It functions in the pathway purine metabolism; IMP biosynthesis via de novo pathway; 5-amino-1-(5-phospho-D-ribosyl)imidazole-4-carboxamide from 5-amino-1-(5-phospho-D-ribosyl)imidazole-4-carboxylate: step 1/2. This chain is Phosphoribosylaminoimidazole-succinocarboxamide synthase, found in Shewanella sp. (strain MR-7).